The sequence spans 147 residues: Hemoglobin subunit gamma (147 aa).

A Globin domain is found at 3–147; that stretch reads HFTAEEKAAI…VANALAYKYH (145 aa). Residues His-64 and His-93 each coordinate heme b.

The protein belongs to the globin family. In terms of assembly, heterotetramer of two alpha chains and two gamma chains in fetal hemoglobin (Hb F). As to expression, red blood cells.

Gamma chains make up the fetal hemoglobin F, in combination with alpha chains. The protein is Hemoglobin subunit gamma (HBG) of Elephas maximus (Indian elephant).